Here is a 100-residue protein sequence, read N- to C-terminus: Large ribosomal subunit protein bL21 (100 aa).

The protein belongs to the bacterial ribosomal protein bL21 family. Part of the 50S ribosomal subunit. Contacts protein L20.

In terms of biological role, this protein binds to 23S rRNA in the presence of protein L20. This chain is Large ribosomal subunit protein bL21, found in Wolbachia sp. subsp. Drosophila simulans (strain wRi).